Here is a 352-residue protein sequence, read N- to C-terminus: DNA polymerase IV (352 aa).

Positions Ile-7–Gly-187 constitute a UmuC domain. 2 residues coordinate Mg(2+): Asp-11 and Asp-105. Residue Glu-106 is part of the active site.

This sequence belongs to the DNA polymerase type-Y family. Monomer. The cofactor is Mg(2+).

Its subcellular location is the cytoplasm. It carries out the reaction DNA(n) + a 2'-deoxyribonucleoside 5'-triphosphate = DNA(n+1) + diphosphate. Functionally, poorly processive, error-prone DNA polymerase involved in untargeted mutagenesis. Copies undamaged DNA at stalled replication forks, which arise in vivo from mismatched or misaligned primer ends. These misaligned primers can be extended by PolIV. Exhibits no 3'-5' exonuclease (proofreading) activity. May be involved in translesional synthesis, in conjunction with the beta clamp from PolIII. The chain is DNA polymerase IV from Colwellia psychrerythraea (strain 34H / ATCC BAA-681) (Vibrio psychroerythus).